The chain runs to 186 residues: Ribosome maturation factor RimM (186 aa).

One can recognise a PRC barrel domain in the interval 103–174 (PEEYHYSDLI…ELQVQPPPGL (72 aa)).

Belongs to the RimM family. Binds ribosomal protein uS19.

Its subcellular location is the cytoplasm. An accessory protein needed during the final step in the assembly of 30S ribosomal subunit, possibly for assembly of the head region. Essential for efficient processing of 16S rRNA. May be needed both before and after RbfA during the maturation of 16S rRNA. It has affinity for free ribosomal 30S subunits but not for 70S ribosomes. The sequence is that of Ribosome maturation factor RimM from Synechococcus sp. (strain JA-3-3Ab) (Cyanobacteria bacterium Yellowstone A-Prime).